We begin with the raw amino-acid sequence, 177 residues long: Cytidylate kinase (177 aa).

Position 7–15 (7–15 (GSPGSGTTT)) interacts with ATP.

It belongs to the cytidylate kinase family. Type 2 subfamily.

The protein localises to the cytoplasm. The catalysed reaction is CMP + ATP = CDP + ADP. The enzyme catalyses dCMP + ATP = dCDP + ADP. This is Cytidylate kinase from Methanocorpusculum labreanum (strain ATCC 43576 / DSM 4855 / Z).